Consider the following 714-residue polypeptide: MATTTPERVMQETMDYHALNAMLNLYDKAGHIQFDKDQQAIDAFFATHVRPHSVTFASQHERLGTLVREGYYDDAVLARYDRAFVLRLFEHAHASGFRFQTFLGAWKFYTSYTLKTFDGKRYLEHFEDRVTMVALTLAQGDETLATQLTDEMLSGRFQPATPTFLNCGKQQRGELVSCFLLRIEDNMESIGRAVNSALQLSKRGGGVAFLLSNLREAGAPIKRIENQSSGVIPVMKMLEDAFSYANQLGARQGAGAVYLHAHHPDILRFLDTKRENADEKIRIKTLSLGVVIPDITFRLAKENAQMALFSPYDIQRRYGKPFGDIAISERYDELIADPHVRKTYINARDFFQTLAEIQFESGYPYIMFEDTVNRANPIAGRINMSNLCSEILQVNSASRYDDNLDYTHIGHDISCNLGSLNIAHVMDSPDIGRTVETAIRGLTAVSDMSHIRSVPSIAAGNAASHAIGLGQMNLHGYLAREGIAYGSPEALDFTNLYFYTITWHAVHTSMRLARERGKTFAGFAQSRYASGDYFTQYLQDDWQPKTAKVRALFARSGITLPTREMWLKLRDDVMRYGIYNQNLQAVPPTGSISYINHATSSIHPIVAKIEIRKEGKTGRVYYPAPFMTNENLDMYQDAYDIGPEKIIDTYAEATRHVDQGLSLTLFFPDTATTRDINKAQIYAWRKGIKSLYYIRLRQLALEGTEIEGCVSCAL.

Substrate-binding positions include Thr161, 177-178, Gly206, 386-390, and 588-592; these read SC, NLCSE, and PTGSI. A disulfide bond links Cys178 and Cys415. Asn386 acts as the Proton acceptor in catalysis. Catalysis depends on Cys388, which acts as the Cysteine radical intermediate. Glu390 (proton acceptor) is an active-site residue.

The protein belongs to the ribonucleoside diphosphate reductase large chain family. Tetramer of two alpha and two beta subunits.

The catalysed reaction is a 2'-deoxyribonucleoside 5'-diphosphate + [thioredoxin]-disulfide + H2O = a ribonucleoside 5'-diphosphate + [thioredoxin]-dithiol. With respect to regulation, under complex allosteric control mediated by deoxynucleoside triphosphates and ATP binding. The type of nucleotide bound at the specificity site determines substrate preference. It seems probable that ATP makes the enzyme reduce CDP and UDP, dGTP favors ADP reduction and dTTP favors GDP reduction. Lacks the N-terminal activity site. Its function is as follows. Provides the precursors necessary for DNA synthesis. Catalyzes the biosynthesis of deoxyribonucleotides from the corresponding ribonucleotides. R1E contains the binding sites for both substrates and allosteric effectors and carries out the actual reduction of the ribonucleotide. The polypeptide is Ribonucleoside-diphosphate reductase 2 subunit alpha (nrdE) (Salmonella typhimurium (strain LT2 / SGSC1412 / ATCC 700720)).